The sequence spans 1237 residues: Anion exchange protein 2 (1237 aa).

Positions 1–237 (MSSAPRRPAS…SYNLQERRRI (237 aa)) are disordered. The Cytoplasmic portion of the chain corresponds to 1–704 (MSSAPRRPAS…DFRDALDPQC (704 aa)). 2 stretches are compositionally biased toward basic and acidic residues: residues 37-49 (ELHR…RFEE) and 58-75 (GGEE…EYHR). Basic residues-rich tracts occupy residues 76 to 85 (QSSHHIHHPL) and 94 to 110 (RRRK…RRRP). Residues Ser-113, Ser-132, Ser-144, Ser-170, and Ser-172 each carry the phosphoserine modification. Residues 120 to 133 (TIEEGEEDEDEASE) show a composition bias toward acidic residues. Residues 137 to 151 (ARAPTQPSPASTPSS) are compositionally biased toward low complexity. The span at 205–215 (GTAGGDDGGAS) shows a compositional bias: gly residues. Ser-239 is modified (phosphoserine). Phosphothreonine is present on Thr-253. Lys-270 is modified (N6-methyllysine). A disordered region spans residues 286-316 (RKNAKGSVQSGREGREPGPTPRARPRAPHKP). Ser-439 carries the phosphoserine modification. Residues 445–466 (SLLGHHHGQGAESDPHVTEPLI) form a disordered region. Residues 704 to 1237 (CLAAVIFIYF…DEYNEMPMPV (534 aa)) form a membrane (anion exchange) region. 4 helical membrane passes run 705–725 (LAAV…FGGL), 750–770 (FCLL…LLVF), 792–812 (IGFW…SFLV), and 822–842 (IFAF…LVKI). Residues 843–893 (FQEHPLHGCSVSNSSEADSGDNATWAGTRVTLGLGNGSSAGPAGQGRPRGQ) lie on the Extracellular side of the membrane. N-linked (GlcNAc...) asparagine glycosylation is found at Asn-855, Asn-864, and Asn-878. A helical membrane pass occupies residues 894-914 (PNTALLSLVLMAGTFFIAFFL). The Cytoplasmic portion of the chain corresponds to 915–929 (RKFKNGRFFPGRVRR). The next 5 membrane-spanning stretches (helical) occupy residues 930–950 (VIGD…DYSI), 985–1005 (FPVW…ILIF), 1032–1052 (LLLI…WLAA), 1086–1106 (RVTG…GDLL), and 1109–1129 (IPLA…LNGI). The S-palmitoyl cysteine moiety is linked to residue Cys-1169. Residues 1170-1190 (LALLWAVMSTAASLAFPFILI) traverse the membrane as a helical segment.

This sequence belongs to the anion exchanger (TC 2.A.31) family.

The protein resides in the apical cell membrane. It localises to the basolateral cell membrane. It catalyses the reaction hydrogencarbonate(in) + chloride(out) = hydrogencarbonate(out) + chloride(in). Sodium-independent anion exchanger which mediates the electroneutral exchange of chloride for bicarbonate ions across the cell membrane. Plays an important role in osteoclast differentiation and function. Regulates bone resorption and calpain-dependent actin cytoskeleton organization in osteoclasts via anion exchange-dependent control of pH. Essential for intracellular pH regulation in CD8(+) T-cells upon CD3 stimulation, modulating CD8(+) T-cell response. In Equus caballus (Horse), this protein is Anion exchange protein 2 (SLC4A2).